Consider the following 529-residue polypeptide: Peptide chain release factor 3 (529 aa).

Residues 11–280 (AKRRTFAIIS…GLVEWAPAPM (270 aa)) form the tr-type G domain. GTP-binding positions include 20–27 (SHPDAGKT), 88–92 (DTPGH), and 142–145 (NKLD).

The protein belongs to the TRAFAC class translation factor GTPase superfamily. Classic translation factor GTPase family. PrfC subfamily.

Its subcellular location is the cytoplasm. Increases the formation of ribosomal termination complexes and stimulates activities of RF-1 and RF-2. It binds guanine nucleotides and has strong preference for UGA stop codons. It may interact directly with the ribosome. The stimulation of RF-1 and RF-2 is significantly reduced by GTP and GDP, but not by GMP. The polypeptide is Peptide chain release factor 3 (Klebsiella pneumoniae (strain 342)).